The chain runs to 536 residues: CUGBP Elav-like family member 2 (536 aa).

3 consecutive RRM domains span residues 58 to 141, 150 to 230, and 451 to 529; these read IKMF…PADS, RKLF…FADT, and ANLF…LKRS.

This sequence belongs to the CELF/BRUNOL family.

Its subcellular location is the nucleus. The protein resides in the cytoplasm. In terms of biological role, RNA-binding protein implicated in the regulation of several post-transcriptional events. May be involved in pre-mRNA alternative splicing, mRNA translation repression and stability. This chain is CUGBP Elav-like family member 2 (celf2), found in Xenopus laevis (African clawed frog).